Reading from the N-terminus, the 469-residue chain is Pup--protein ligase (469 aa).

Glu9 contacts Mg(2+). Arg53 provides a ligand contact to ATP. Residue Tyr55 participates in Mg(2+) binding. Asp57 functions as the Proton acceptor in the catalytic mechanism. Glu63 contacts Mg(2+). Thr66 and Trp430 together coordinate ATP.

This sequence belongs to the Pup ligase/Pup deamidase family. Pup-conjugating enzyme subfamily.

It catalyses the reaction ATP + [prokaryotic ubiquitin-like protein]-L-glutamate + [protein]-L-lysine = ADP + phosphate + N(6)-([prokaryotic ubiquitin-like protein]-gamma-L-glutamyl)-[protein]-L-lysine.. The protein operates within protein degradation; proteasomal Pup-dependent pathway. Its pathway is protein modification; protein pupylation. Catalyzes the covalent attachment of the prokaryotic ubiquitin-like protein modifier Pup to the proteasomal substrate proteins, thereby targeting them for proteasomal degradation. This tagging system is termed pupylation. The ligation reaction involves the side-chain carboxylate of the C-terminal glutamate of Pup and the side-chain amino group of a substrate lysine. This is Pup--protein ligase from Kocuria rhizophila (strain ATCC 9341 / DSM 348 / NBRC 103217 / DC2201).